We begin with the raw amino-acid sequence, 641 residues long: Probable licABCH operon regulator (641 aa).

2 PRD domains span residues 184–289 and 296–403; these read ILPK…TQSQ and SIEE…KKTE. Phosphohistidine; by HPr is present on residues His219, His278, His333, and His392. The 92-residue stretch at 407–498 folds into the PTS EIIB type-2 domain; that stretch reads KRCIIVCASG…ILSDEKEKAN (92 aa). A Phosphocysteine; by EIIA modification is found at Cys413. Residues 499–638 enclose the PTS EIIA type-2 domain; it reads RYLKKELVFF…QELSDVFDQK (140 aa). Residue His559 is modified to Phosphohistidine; by EIIB.

Belongs to the transcriptional antiterminator BglG family.

Its activity is regulated as follows. The regulatory activity of LicR is modulated by phosphorylation and dephosphorylation of the various LicR domains. It becomes activated via phosphoryl group transfer from PEP, EI and HPr on the two conserved histidine residues in the PRD 2 domain, whereas phosphorylation of the EIIA-like domain on His-559 by the PTS EIIB component LicB inactivates LicR. In terms of biological role, positive regulator of the licABCH operon. The sequence is that of Probable licABCH operon regulator (licR) from Bacillus subtilis (strain 168).